The sequence spans 102 residues: Protamine-2 (102 aa).

Disordered regions lie at residues 1–40 (MVRYRVRSPSEPSHEVYRQQLHGQEQGHHGQEEQGLSPEH) and 67–102 (HRQQHRSCRRRKRRSCRHRRKHRRGCRTRRRTCRRH). Residues serine 8, serine 10, and serine 37 each carry the phosphoserine modification.

Belongs to the protamine P2 family. As to quaternary structure, interacts with TDRP. In terms of processing, proteolytic processing into mature chains is required for histone eviction during spermatogenesis. Transition proteins (TNP1 and TNP2) are required for processing. In terms of tissue distribution, testis.

It is found in the nucleus. The protein localises to the chromosome. Functionally, protamines substitute for histones in the chromatin of sperm during the haploid phase of spermatogenesis. They compact sperm DNA into a highly condensed, stable and inactive complex. The protein is Protamine-2 (PRM2) of Pan troglodytes (Chimpanzee).